A 186-amino-acid polypeptide reads, in one-letter code: Negative modulator of initiation of replication (186 aa).

It belongs to the SeqA family. Homodimer. Polymerizes to form helical filaments.

It is found in the cytoplasm. Functionally, negative regulator of replication initiation, which contributes to regulation of DNA replication and ensures that replication initiation occurs exactly once per chromosome per cell cycle. Binds to pairs of hemimethylated GATC sequences in the oriC region, thus preventing assembly of replication proteins and re-initiation at newly replicated origins. Repression is relieved when the region becomes fully methylated. The sequence is that of Negative modulator of initiation of replication from Haemophilus ducreyi (strain 35000HP / ATCC 700724).